Reading from the N-terminus, the 364-residue chain is Chorismate synthase (364 aa).

NADP(+) is bound at residue arginine 47. FMN is bound by residues 125–127, glycine 285, 300–304, and arginine 327; these read RFS and KPTPS.

The protein belongs to the chorismate synthase family. In terms of assembly, homotetramer. Requires FMNH2 as cofactor.

It catalyses the reaction 5-O-(1-carboxyvinyl)-3-phosphoshikimate = chorismate + phosphate. The protein operates within metabolic intermediate biosynthesis; chorismate biosynthesis; chorismate from D-erythrose 4-phosphate and phosphoenolpyruvate: step 7/7. Functionally, catalyzes the anti-1,4-elimination of the C-3 phosphate and the C-6 proR hydrogen from 5-enolpyruvylshikimate-3-phosphate (EPSP) to yield chorismate, which is the branch point compound that serves as the starting substrate for the three terminal pathways of aromatic amino acid biosynthesis. This reaction introduces a second double bond into the aromatic ring system. This chain is Chorismate synthase, found in Dehalococcoides mccartyi (strain ATCC BAA-2100 / JCM 16839 / KCTC 5957 / BAV1).